The sequence spans 198 residues: Dual specificity protein phosphatase 1 (198 aa).

Residues 1 to 20 (MSSRDRGSPSSSSSSSSLPG) are disordered. Residues 8–17 (SPSSSSSSSS) are compositionally biased toward low complexity. Residues 26–47 (EKVKNQIQALVRVIKVARTYRD) are caM binding domain 1. Positions 50-191 (VPSLIEQGLY…LQDLEKSMQV (142 aa)) constitute a Tyrosine-protein phosphatase domain. The active-site Phosphocysteine intermediate is the C135. Residues 151–180 (MKKHGMTLAQALQHVKSKRPVASPNAGFIR) form a caM binding domain 2 region.

It belongs to the protein-tyrosine phosphatase family. Non-receptor class dual specificity subfamily. In terms of assembly, interacts with calmodulin (CaM) in a calcium Ca(2+)-dependent manner. Expressed in roots, stems, leaves and flowers.

The protein localises to the nucleus. It is found in the cytoplasm. It catalyses the reaction O-phospho-L-tyrosyl-[protein] + H2O = L-tyrosyl-[protein] + phosphate. The enzyme catalyses O-phospho-L-seryl-[protein] + H2O = L-seryl-[protein] + phosphate. The catalysed reaction is O-phospho-L-threonyl-[protein] + H2O = L-threonyl-[protein] + phosphate. Inhibited by sodium vanadate and sodium tungstate. NaF and spermifine repress specifically phosphoserine and phosphothreonine phosphatase activity. Functionally, has a dual specificity toward Ser/Thr and Tyr-containing proteins. Dephosphorylates MPK4 in vitro. The sequence is that of Dual specificity protein phosphatase 1 (DSPTP1) from Arabidopsis thaliana (Mouse-ear cress).